The chain runs to 153 residues: Endoribonuclease YbeY (153 aa).

Positions 118, 122, and 128 each coordinate Zn(2+).

Belongs to the endoribonuclease YbeY family. It depends on Zn(2+) as a cofactor.

The protein localises to the cytoplasm. In terms of biological role, single strand-specific metallo-endoribonuclease involved in late-stage 70S ribosome quality control and in maturation of the 3' terminus of the 16S rRNA. This chain is Endoribonuclease YbeY, found in Oenococcus oeni (strain ATCC BAA-331 / PSU-1).